We begin with the raw amino-acid sequence, 478 residues long: ATP synthase subunit beta (478 aa).

Residue 164 to 171 (GGAGVGKT) coordinates ATP.

The protein belongs to the ATPase alpha/beta chains family. In terms of assembly, F-type ATPases have 2 components, CF(1) - the catalytic core - and CF(0) - the membrane proton channel. CF(1) has five subunits: alpha(3), beta(3), gamma(1), delta(1), epsilon(1). CF(0) has three main subunits: a(1), b(2) and c(9-12). The alpha and beta chains form an alternating ring which encloses part of the gamma chain. CF(1) is attached to CF(0) by a central stalk formed by the gamma and epsilon chains, while a peripheral stalk is formed by the delta and b chains.

It localises to the cell membrane. The enzyme catalyses ATP + H2O + 4 H(+)(in) = ADP + phosphate + 5 H(+)(out). In terms of biological role, produces ATP from ADP in the presence of a proton gradient across the membrane. The catalytic sites are hosted primarily by the beta subunits. This Corynebacterium kroppenstedtii (strain DSM 44385 / JCM 11950 / CIP 105744 / CCUG 35717) protein is ATP synthase subunit beta.